A 243-amino-acid polypeptide reads, in one-letter code: Pyridoxine 5'-phosphate synthase (243 aa).

Residue N9 coordinates 3-amino-2-oxopropyl phosphate. 11–12 contacts 1-deoxy-D-xylulose 5-phosphate; the sequence is DH. A 3-amino-2-oxopropyl phosphate-binding site is contributed by R20. The active-site Proton acceptor is H45. Positions 47 and 52 each coordinate 1-deoxy-D-xylulose 5-phosphate. E72 (proton acceptor) is an active-site residue. A 1-deoxy-D-xylulose 5-phosphate-binding site is contributed by T102. Catalysis depends on H193, which acts as the Proton donor. 3-amino-2-oxopropyl phosphate-binding positions include G194 and 215–216; that span reads GH.

This sequence belongs to the PNP synthase family. In terms of assembly, homooctamer; tetramer of dimers.

Its subcellular location is the cytoplasm. The enzyme catalyses 3-amino-2-oxopropyl phosphate + 1-deoxy-D-xylulose 5-phosphate = pyridoxine 5'-phosphate + phosphate + 2 H2O + H(+). It functions in the pathway cofactor biosynthesis; pyridoxine 5'-phosphate biosynthesis; pyridoxine 5'-phosphate from D-erythrose 4-phosphate: step 5/5. Catalyzes the complicated ring closure reaction between the two acyclic compounds 1-deoxy-D-xylulose-5-phosphate (DXP) and 3-amino-2-oxopropyl phosphate (1-amino-acetone-3-phosphate or AAP) to form pyridoxine 5'-phosphate (PNP) and inorganic phosphate. In Vibrio parahaemolyticus serotype O3:K6 (strain RIMD 2210633), this protein is Pyridoxine 5'-phosphate synthase.